We begin with the raw amino-acid sequence, 260 residues long: MAAISMKELLEAGAHFGHQTRRWDPRMDEYIFTSRNGIHIIDLQKTLRMADDAYNWVKGEAADGANFLFVGTKKQATEAIEEEAKRAGVAYVNHRWLGGTLTNWNTIKTRINKLKELRAAEEDGSFDKLPKKEASQLGKQKAKLEKFLGGIADMEDIPDVMFVVDPKTEEIAVKEARSLNIPVVAMIDTNGNPDLVDVKIPANDDAIRAVKLITSKMADAIIEGRQGQDAGEDSAEKTFADTADGEGDFEESSNNENQEA.

The disordered stretch occupies residues 224–260 (GRQGQDAGEDSAEKTFADTADGEGDFEESSNNENQEA). Residues 243–260 (ADGEGDFEESSNNENQEA) show a composition bias toward acidic residues.

The protein belongs to the universal ribosomal protein uS2 family.

The chain is Small ribosomal subunit protein uS2 from Oenococcus oeni (strain ATCC BAA-331 / PSU-1).